The primary structure comprises 578 residues: Trehalase (578 aa).

An N-terminal signal peptide occupies residues 1-19 (MPGSTWELHLLLLLGLGLG). N-linked (GlcNAc...) asparagine glycosylation is present at N78. Residues R168, 175–176 (WD), N212, and 221–223 (RSQ) each bind substrate. Residue N261 is glycosylated (N-linked (GlcNAc...) asparagine). Substrate contacts are provided by residues 286 to 288 (RPE) and G319. The active-site Proton donor/acceptor is D321. Residue N369 is glycosylated (N-linked (GlcNAc...) asparagine). E514 (proton donor/acceptor) is an active-site residue. Residue E528 participates in substrate binding. S555 carries GPI-anchor amidated serine lipidation. The propeptide at 556–578 (GTQLALLEPHCLAAALLLSFLTR) is removed in mature form.

This sequence belongs to the glycosyl hydrolase 37 family. Homodimer; disulfide-linked. In terms of tissue distribution, expressed in small intestine, kidney, and to a lesser extent in liver.

Its subcellular location is the cell membrane. The enzyme catalyses alpha,alpha-trehalose + H2O = alpha-D-glucose + beta-D-glucose. Intestinal trehalase is probably involved in the hydrolysis of ingested trehalose. The chain is Trehalase (TREH) from Oryctolagus cuniculus (Rabbit).